Consider the following 122-residue polypeptide: Holo-[acyl-carrier-protein] synthase (122 aa).

Positions 9 and 58 each coordinate Mg(2+).

It belongs to the P-Pant transferase superfamily. AcpS family. Mg(2+) is required as a cofactor.

It is found in the cytoplasm. The catalysed reaction is apo-[ACP] + CoA = holo-[ACP] + adenosine 3',5'-bisphosphate + H(+). Functionally, transfers the 4'-phosphopantetheine moiety from coenzyme A to a Ser of acyl-carrier-protein. In Chlamydia pneumoniae (Chlamydophila pneumoniae), this protein is Holo-[acyl-carrier-protein] synthase.